A 290-amino-acid chain; its full sequence is Eukaryotic translation initiation factor 3 subunit G (290 aa).

The interval Met-1–Gly-34 is disordered. The RRM domain occupies Ala-210–Arg-288.

Belongs to the eIF-3 subunit G family. As to quaternary structure, component of the eukaryotic translation initiation factor 3 (eIF-3) complex.

Its subcellular location is the cytoplasm. In terms of biological role, RNA-binding component of the eukaryotic translation initiation factor 3 (eIF-3) complex, which is involved in protein synthesis of a specialized repertoire of mRNAs and, together with other initiation factors, stimulates binding of mRNA and methionyl-tRNAi to the 40S ribosome. The eIF-3 complex specifically targets and initiates translation of a subset of mRNAs involved in cell proliferation. This subunit can bind 18S rRNA. The polypeptide is Eukaryotic translation initiation factor 3 subunit G (tif35) (Aspergillus fumigatus (strain CBS 144.89 / FGSC A1163 / CEA10) (Neosartorya fumigata)).